A 390-amino-acid chain; its full sequence is MSSMLSPPVKKRKIVAPQSQSASASFQSLPDDLILSIVARVPRLYHRTVSLVCKSFRSLLVSPELYKARSVSGHTESCLYLSIACYPDYRMFTLCRKPDQTLTTSEEEEKKKSNGYYLAPVPDPDSHPVYFSSLVTVGSDIYNIAGSHASSNVSILDCRSNTWREAPRLGVELTSVSASVLDRKIFVVGMYADDEESESKNDFFEVLDTETHTWDPQPFNCSETKDKFLNCRTAFIDGKFLVKPWIHRGVVAYNSKESRWEPVQTKMAMSMFNDSYCQIHNVIYLAFDGRIRWYDDALNCWGDVQGLLELGNIPHGPSCVRLADYRGNIAVFWFRYLPDNDDYKWKMIWCAEIALERRTSWEIWGKVLWFDPVLTVPADYEFVKALAATV.

One can recognise an F-box domain in the interval 23–69 (SASFQSLPDDLILSIVARVPRLYHRTVSLVCKSFRSLLVSPELYKAR). Kelch repeat units follow at residues 140-183 (DIYN…VLDR), 185-234 (IFVV…CRTA), and 236-281 (IDGK…QIHN).

In Arabidopsis thaliana (Mouse-ear cress), this protein is F-box/kelch-repeat protein At3g06570.